We begin with the raw amino-acid sequence, 370 residues long: Flagellar P-ring protein (370 aa).

The first 21 residues, 1 to 21 (MKLLLFILMISSIIIVPVGQA), serve as a signal peptide directing secretion.

Belongs to the FlgI family. As to quaternary structure, the basal body constitutes a major portion of the flagellar organelle and consists of four rings (L,P,S, and M) mounted on a central rod.

It localises to the periplasm. Its subcellular location is the bacterial flagellum basal body. Functionally, assembles around the rod to form the L-ring and probably protects the motor/basal body from shearing forces during rotation. This is Flagellar P-ring protein from Pseudoalteromonas atlantica (strain T6c / ATCC BAA-1087).